The chain runs to 105 residues: Large ribosomal subunit protein uL24 (105 aa).

The protein belongs to the universal ribosomal protein uL24 family. As to quaternary structure, part of the 50S ribosomal subunit.

Functionally, one of two assembly initiator proteins, it binds directly to the 5'-end of the 23S rRNA, where it nucleates assembly of the 50S subunit. One of the proteins that surrounds the polypeptide exit tunnel on the outside of the subunit. The chain is Large ribosomal subunit protein uL24 from Sphingopyxis alaskensis (strain DSM 13593 / LMG 18877 / RB2256) (Sphingomonas alaskensis).